The chain runs to 408 residues: DNA polymerase processivity factor (408 aa).

The short motif at 344-353 (KKRRNLLTKR) is the Nuclear localization signal element.

It belongs to the herpesviridae DNA polymerase processivity factor family. As to quaternary structure, interacts with the DNA polymerase catalytic subunit. Interacts with the origin-binding protein.

The protein localises to the host nucleus. Plays an essential role in viral DNA replication by acting as the polymerase accessory subunit. Associates with the viral polymerase to increase its processivity and forms high-affinity direct interactions with DNA. Facilitates the origin-binding protein loading onto DNA thus increasing its ability to assemble into a functional complex capable of unwinding duplex DNA. The chain is DNA polymerase processivity factor from Varicella-zoster virus (strain Oka vaccine) (HHV-3).